A 506-amino-acid polypeptide reads, in one-letter code: Maturase K (506 aa).

It belongs to the intron maturase 2 family. MatK subfamily.

It is found in the plastid. It localises to the chloroplast. In terms of biological role, usually encoded in the trnK tRNA gene intron. Probably assists in splicing its own and other chloroplast group II introns. This chain is Maturase K, found in Angiopteris evecta (Mule's foot fern).